The primary structure comprises 310 residues: Junctional adhesion molecule C (310 aa).

A signal peptide spans 1–31; it reads MALRRPPRLRLCARLPDFFLLLLFRGCLIGA. Topologically, residues 32–241 are extracellular; it reads VNLKSSNRTP…EQEMEVYDLN (210 aa). The 93-residue stretch at 35–127 folds into the Ig-like V-type domain; that stretch reads KSSNRTPVVQ…VARNDRKEID (93 aa). 2 disulfides stabilise this stretch: Cys-53/Cys-115 and Cys-160/Cys-219. Residues Asn-104 and Asn-192 are each glycosylated (N-linked (GlcNAc...) asparagine). The Ig-like C2-type domain maps to 139–236; that stretch reads PVTPVCRVPK…SARCEEQEME (98 aa). Residues 242–262 traverse the membrane as a helical segment; it reads IGGIIGGVLVVLAVLALITLG. Residues 263–310 are Cytoplasmic-facing; sequence ICCAYRRGYFINNKQDGESYKNPGKPDGVNYIRTDEEGDFRHKSSFVI. S-palmitoyl cysteine attachment occurs at residues Cys-264 and Cys-265.

The protein belongs to the immunoglobulin superfamily. In terms of assembly, interacts with ITGAM. Interacts with GORASP2. Post-translationally, proteolytically cleaved from endothelial cells surface into a soluble form by ADAM10 and ADAM17; the release of soluble JAM3 is increased by pro-inflammatory factors. In terms of processing, S-palmitoylated by ZDHHC7. S-palmitoylation promotes expression at tight junctions. In terms of tissue distribution, detected on round and elongated spermatids (at protein level). Highest expression in placenta, brain and kidney. Significant expression is detected on platelets. Expressed in intestinal mucosa cells. Expressed in the vascular endothelium. Found in serum (at protein level). Also detected in the synovial fluid of patients with rheumatoid arthritis, psoriatic arthritis or ostearthritis (at protein level).

The protein localises to the cell membrane. The protein resides in the cell junction. It localises to the desmosome. Its subcellular location is the tight junction. It is found in the secreted. Its function is as follows. Junctional adhesion protein that mediates heterotypic cell-cell interactions with its cognate receptor JAM2 to regulate different cellular processes. Plays a role in homing and mobilization of hematopoietic stem and progenitor cells within the bone marrow. At the surface of bone marrow stromal cells, it contributes to the retention of the hematopoietic stem and progenitor cells expressing JAM3. Plays a central role in leukocytes extravasation by facilitating transmigration through the endothelium. Plays a role in spermatogenesis where JAM2 and JAM3, which are respectively expressed by Sertoli and germ cells, mediate an interaction between both cell types and play an essential role in the anchorage of germ cells onto Sertoli cells and the assembly of cell polarity complexes during spermatid differentiation. Also functions as a counter-receptor for ITGAM, mediating leukocyte-platelet interactions and is involved in the regulation of transepithelial migration of polymorphonuclear neutrophils (PMN). Plays a role in angiogenesis. Plays a role in the regulation of cell migration. During myogenesis, it is involved in myocyte fusion. Promotes chemotaxis of vascular endothelial cells and stimulates angiogenesis. The protein is Junctional adhesion molecule C (JAM3) of Homo sapiens (Human).